Reading from the N-terminus, the 263-residue chain is Putative TATA-binding protein pB263R (263 aa).

Belongs to the asfivirus B263R family.

Functionally, putative TATA-binding protein. This Ornithodoros (relapsing fever ticks) protein is Putative TATA-binding protein pB263R.